An 802-amino-acid chain; its full sequence is Phenylalanine--tRNA ligase beta subunit (802 aa).

Residues 38–149 (KSSLKPFVIA…ADAPVGTSFA (112 aa)) enclose the tRNA-binding domain. The region spanning 399-474 (HKPKIVSFPI…RIHGVDNIAP (76 aa)) is the B5 domain. Mg(2+) is bound by residues D452, D458, E461, and E462. In terms of domain architecture, FDX-ACB spans 708–801 (SAFQAVKRDF…VGKQTGGVLR (94 aa)).

It belongs to the phenylalanyl-tRNA synthetase beta subunit family. Type 1 subfamily. As to quaternary structure, tetramer of two alpha and two beta subunits. It depends on Mg(2+) as a cofactor.

The protein resides in the cytoplasm. The enzyme catalyses tRNA(Phe) + L-phenylalanine + ATP = L-phenylalanyl-tRNA(Phe) + AMP + diphosphate + H(+). This is Phenylalanine--tRNA ligase beta subunit from Mesorhizobium japonicum (strain LMG 29417 / CECT 9101 / MAFF 303099) (Mesorhizobium loti (strain MAFF 303099)).